We begin with the raw amino-acid sequence, 309 residues long: Taste receptor type 2 member 113 (309 aa).

Topologically, residues 1–8 (MVAVLQST) are extracellular. Residues 9–29 (FAIIFSMEFIVGTLGNGFIIL) form a helical membrane-spanning segment. Topologically, residues 30–55 (MTCIDWVRRRKISLVDQILTALAITR) are cytoplasmic. A helical membrane pass occupies residues 56–76 (ITLILLVFIDWWVSVLFPALH). The Extracellular portion of the chain corresponds to 77–101 (ETGKILRMYFISWTVINHCNLWLTA). The helical transmembrane segment at 102 to 122 (SLSIIYFLKIASFSSIIFLYL) threads the bilayer. At 123-127 (KFRVK) the chain is on the cytoplasmic side. The helical transmembrane segment at 128-148 (NVVFVTLLVSLFFLFINTAIV) threads the bilayer. The Extracellular segment spans residues 149–185 (NVYFDVCFDGVQRNVSQVSRLYNHEQICKFLSFTNPM). An N-linked (GlcNAc...) asparagine glycan is attached at N162. A helical membrane pass occupies residues 186–206 (FAFIPFVTSMATFFLLIFSLW). The Cytoplasmic portion of the chain corresponds to 207–229 (RHLKNMKHNAEGCRDVSTIVHIR). The helical transmembrane segment at 230–250 (ALQTIIVSVVLYSTFFLSFFV) threads the bilayer. The Extracellular segment spans residues 251–262 (KVWSSGSPERYL). A helical transmembrane segment spans residues 263–283 (IFLFVWALGNAVLPAHTFVLI). Topologically, residues 284-309 (WGNCRLRWASLSLMLWLRYRFKNIDV) are cytoplasmic.

It belongs to the G-protein coupled receptor T2R family.

The protein localises to the membrane. Functionally, putative taste receptor which may play a role in the perception of bitterness. In Rattus norvegicus (Rat), this protein is Taste receptor type 2 member 113.